The following is a 348-amino-acid chain: Calcium homeostasis modulator protein 1 (348 aa).

Topologically, residues 1 to 20 (MDKFRMIFQFLQSNQESFMN) are cytoplasmic. The central pore stretch occupies residues 9–36 (QFLQSNQESFMNGICGIMALASAQMYSA). A helical membrane pass occupies residues 21 to 36 (GICGIMALASAQMYSA). Residues 37-48 (FDFNCPCLPGYN) lie on the Extracellular side of the membrane. Disulfide bonds link Cys-41–Cys-126 and Cys-43–Cys-160. A helical membrane pass occupies residues 49–71 (VVYSLGILLTPPLVLFLLGLVMN). Residues 62 to 69 (VLFLLGLV) are phospholipid-binding. The Cytoplasmic segment spans residues 72-98 (NNISMLAEEWKRPAGRRAKDPAVLRYM). Residues 99 to 124 (FCSMAQRALIAPVVWVAVTLLDGKCF) form a helical membrane-spanning segment. Cys-100 carries S-palmitoyl cysteine lipidation. A phospholipid-binding region spans residues 104-116 (QRALIAPVVWVAV). At 125–179 (LCAFCTAVPVATLGNGSLVPGLPAPELARLLARVPCPEIYDGNWLLAREVAVRYL) the chain is on the extracellular side. An N-linked (GlcNAc...) asparagine glycan is attached at Asn-139. The helical transmembrane segment at 180–205 (RCISQALGWSFVLLTTLLAFVVRSVR) threads the bilayer. The tract at residues 191–201 (VLLTTLLAFVV) is phospholipid-binding. Topologically, residues 206 to 348 (PCFTQVAFLK…KEVATYFSKV (143 aa)) are cytoplasmic. Cys-207 carries the S-palmitoyl cysteine lipid modification. The segment at 324–348 (LMSNGWAGGEPRPPRKEVATYFSKV) is disordered.

This sequence belongs to the CALHM family. As to quaternary structure, oligomerizes to form hexamers and octamers. Does not form gap junctions. Associates with CALHM3 as a pore-forming subunit in a hetero-hexameric channel complex. N-glycosylated. Assembly with CALHM3 is associated with N-glycan remodeling and formation of hybrid complex- and high mannose-type glycochains. This N-glycan processing regulates channel trafficking and gating kinetics. Post-translationally, palmitoylated by ZDHHC3, ZDHHC20 and possibly ZDHHC7. Palmitoylation regulates voltage-dependent gating of the channel by shifting it toward more depolarized potentials. In terms of tissue distribution, specifically expressed in type II taste bud cells (at protein level). Not expressed in brain.

It is found in the cell membrane. Its subcellular location is the endoplasmic reticulum membrane. It localises to the basolateral cell membrane. It carries out the reaction ATP(in) = ATP(out). It catalyses the reaction Ca(2+)(in) = Ca(2+)(out). The catalysed reaction is Mg(2+)(in) = Mg(2+)(out). The enzyme catalyses Na(+)(in) = Na(+)(out). It carries out the reaction K(+)(in) = K(+)(out). It catalyses the reaction Li(+)(in) = Li(+)(out). The catalysed reaction is Rb(+)(in) = Rb(+)(out). The enzyme catalyses Cs(+)(in) = Cs(+)(out). It carries out the reaction chloride(in) = chloride(out). With respect to regulation, regulated by membrane voltage and extracellular Ca(2+). Inhibited by Gd(3+), ruthenium red, and Zn(2+) and partially inhibited by 2-aminoethoxydiphenyl borate. Its function is as follows. Pore-forming subunit of gustatory voltage-gated ion channels required for sensory perception of sweet, bitter and umami tastes. With CALHM3 forms a fast-activating voltage-gated ATP-release channel in type II taste bud cells, ATP acting as a neurotransmitter to activate afferent neural gustatory pathways. Acts both as a voltage-gated and calcium-activated ion channel: mediates neuronal excitability in response to membrane depolarization and low extracellular Ca(2+) concentration. Has poor ion selectivity and forms a wide pore (around 14 Angstroms) that mediates permeation of small ions including Ca(2+), Na(+), K(+) and Cl(-), as well as larger ions such as ATP(4-). Mediates Ca(2+) influx and downstream activation of the ERK1 and ERK2 cascade in neurons. Triggers endoplasmic reticulum stress by reducing the calcium content of the endoplasmic reticulum. May indirectly control amyloid precursor protein (APP) proteolysis and aggregated amyloid-beta (Abeta) peptides levels in a Ca(2+) dependent manner. This is Calcium homeostasis modulator protein 1 from Mus musculus (Mouse).